The following is a 403-amino-acid chain: RUN domain-containing protein 3B (403 aa).

Residues 1–20 are disordered; that stretch reads MASRSLGGLSGSRGGGKKSL. Omega-N-methylarginine is present on arginine 13. Residues 53 to 185 form the RUN domain; it reads DDSSPEFNNF…IDFSFCLKGE (133 aa). Residues 207-232 form a disordered region; the sequence is SDSISSDEEELRTFGSSDSEGSTPEN. Serine 211 and serine 212 each carry phosphoserine. Residues 220-231 show a composition bias toward polar residues; the sequence is FGSSDSEGSTPE. Positions 296–321 form a coiled coil; the sequence is AHKLEKEQLEYIIVELQDQLKSYQSL.

The protein belongs to the RUNDC3 family. As to quaternary structure, interacts with RAP2A.

The protein is RUN domain-containing protein 3B (Rundc3b) of Rattus norvegicus (Rat).